A 242-amino-acid chain; its full sequence is Phosphatidylcholine synthase (242 aa).

Topologically, residues 1–15 (MKIFNYKRVPYAEMR) are cytoplasmic. Residues 16–36 (AFSVHILTASGSFLAFLGVVA) form a helical membrane-spanning segment. The Periplasmic portion of the chain corresponds to 37-41 (AAEHR). Residues 42-62 (FIDMFWWLGLALLVDGIDGPI) form a helical membrane-spanning segment. At 63–76 (ARKVRVKEVLPNWS) the chain is on the cytoplasmic side. The chain crosses the membrane as a helical span at residues 77–97 (GDTLDNIIDYVTYVLLPAFAL). Residues 98–100 (YQS) are Periplasmic-facing. A helical membrane pass occupies residues 101–121 (GMIGEPWSFVAAGMIVVSSAI). Residues 122-133 (YYADMGMKTDEY) are Cytoplasmic-facing. Residues 134 to 154 (FFSGFPVVWNMIVFTLFVIDA) form a helical membrane-spanning segment. The Periplasmic portion of the chain corresponds to 155–159 (SATTA). A helical transmembrane segment spans residues 160–180 (LTVVIVSVVLTFLPINFLHPV). The Cytoplasmic portion of the chain corresponds to 181–187 (RVKRLRP). Residues 188-208 (LNLGVFFLWSALGIFSLLMHF) form a helical membrane-spanning segment. Topologically, residues 209–214 (DTPEWA) are periplasmic. Residues 215–235 (LILFIVTGAYLYVIGAVLQFF) traverse the membrane as a helical segment. The Cytoplasmic portion of the chain corresponds to 236 to 242 (PALGRET).

The protein belongs to the CDP-alcohol phosphatidyltransferase class-I family. Mn(2+) serves as cofactor.

It is found in the cell inner membrane. The catalysed reaction is a CDP-1,2-diacyl-sn-glycerol + choline = a 1,2-diacyl-sn-glycero-3-phosphocholine + CMP + H(+). In terms of biological role, condenses choline with CDP-diglyceride to produce phosphatidylcholine and CMP. The polypeptide is Phosphatidylcholine synthase (Rhizobium johnstonii (strain DSM 114642 / LMG 32736 / 3841) (Rhizobium leguminosarum bv. viciae)).